The following is a 26-amino-acid chain: Neprilysin (26 aa).

The protein belongs to the peptidase M13 family. The cofactor is Zn(2+).

Its subcellular location is the cell membrane. It carries out the reaction Preferential cleavage of polypeptides between hydrophobic residues, particularly with Phe or Tyr at P1'.. The enzyme catalyses substance P + H2O = substance P(1-9) + L-Leu-L-Met-NH2. It catalyses the reaction substance P + H2O = substance P(1-7) + L-Phe-Gly-L-Leu-L-Met-NH2. The catalysed reaction is neurotensin + H2O = neurotensin(1-11) + L-isoleucyl-L-leucine. It carries out the reaction neurotensin + H2O = neurotensin(1-10) + L-tyrosyl-L-isoleucyl-L-leucine. Functionally, thermolysin-like specificity, but is almost confined on acting on polypeptides of up to 30 amino acids. Biologically important in the destruction of opioid peptides such as Met- and Leu-enkephalins by cleavage of a Gly-Phe bond. Catalyzes cleavage of bradykinin, substance P and neurotensin peptides. Able to cleave angiotensin-1, angiotensin-2 and angiotensin 1-9. Involved in the degradation of atrial natriuretic factor (ANF) and brain natriuretic factor (BNP(1-32)). Displays UV-inducible elastase activity toward skin preelastic and elastic fibers. This is Neprilysin (MME) from Sus scrofa (Pig).